The following is a 1132-amino-acid chain: DNA-directed RNA polymerase I subunit RPA2 (1132 aa).

Residues cysteine 1067–cysteine 1098 form a C4-type zinc finger.

It belongs to the RNA polymerase beta chain family. As to quaternary structure, component of the RNA polymerase I (Pol I) complex consisting of at least 13 subunits.

It localises to the nucleus. Its subcellular location is the nucleolus. It is found in the chromosome. The catalysed reaction is RNA(n) + a ribonucleoside 5'-triphosphate = RNA(n+1) + diphosphate. Functionally, DNA-dependent RNA polymerase catalyzes the transcription of DNA into RNA using the four ribonucleoside triphosphates as substrates. Second largest core component of RNA polymerase I which synthesizes ribosomal RNA precursors. Proposed to contribute to the polymerase catalytic activity and forms the polymerase active center together with the largest subunit. Pol I is composed of mobile elements and RPA2 is part of the core element with the central large cleft and probably a clamp element that moves to open and close the cleft. This is DNA-directed RNA polymerase I subunit RPA2 (polr1b) from Danio rerio (Zebrafish).